A 328-amino-acid polypeptide reads, in one-letter code: C-type lectin domain family 4 member K (328 aa).

At 1–43 (MTVEKEAPDAHFTVDKQNISLWPREPPPKSGPSLVPGKTPTVR) the chain is on the cytoplasmic side. The chain crosses the membrane as a helical; Signal-anchor for type II membrane protein span at residues 44 to 64 (AALICLTLVLVASVLLQAVLY). Topologically, residues 65–328 (PRFMGTISDV…CKRPYVPSEP (264 aa)) are extracellular. Residues Asn87, Asn113, and Asn180 are each glycosylated (N-linked (GlcNAc...) asparagine). Residues 145 to 190 (EEVSTLNAQIPELKSDLEKASALNTKIRALQGSLENMSKLLKRQND) adopt a coiled-coil conformation. The 119-residue stretch at 202-320 (FKGNFYYFSL…CDKTFLFICK (119 aa)) folds into the C-type lectin domain. Intrachain disulfides connect Cys223-Cys319 and Cys295-Cys311.

As to quaternary structure, homotrimer. As to expression, exclusively expressed by Langerhans cells. Expressed in astrocytoma and malignant ependymoma, but not in normal brain tissues.

It is found in the membrane. Calcium-dependent lectin displaying mannose-binding specificity. Induces the formation of Birbeck granules (BGs); is a potent regulator of membrane superimposition and zippering. Binds to sulfated as well as mannosylated glycans, keratan sulfate (KS) and beta-glucans. Facilitates uptake of antigens and is involved in the routing and/or processing of antigen for presentation to T cells. Major receptor on primary Langerhans cells for Candida species, Saccharomyces species, and Malassezia furfur. Protects against human immunodeficiency virus-1 (HIV-1) infection. Binds to high-mannose structures present on the envelope glycoprotein which is followed by subsequent targeting of the virus to the Birbeck granules leading to its rapid degradation. The protein is C-type lectin domain family 4 member K (CD207) of Homo sapiens (Human).